A 276-amino-acid polypeptide reads, in one-letter code: Type III pantothenate kinase (276 aa).

18 to 25 (EIGNSRLH) lines the ATP pocket. Substrate is bound by residues Y116 and 120–123 (GIDR). The active-site Proton acceptor is D122. D142 serves as a coordination point for K(+). T145 provides a ligand contact to ATP. Substrate is bound at residue T200.

Belongs to the type III pantothenate kinase family. As to quaternary structure, homodimer. NH4(+) is required as a cofactor. Requires K(+) as cofactor.

Its subcellular location is the cytoplasm. It catalyses the reaction (R)-pantothenate + ATP = (R)-4'-phosphopantothenate + ADP + H(+). It participates in cofactor biosynthesis; coenzyme A biosynthesis; CoA from (R)-pantothenate: step 1/5. Catalyzes the phosphorylation of pantothenate (Pan), the first step in CoA biosynthesis. The protein is Type III pantothenate kinase of Nostoc sp. (strain PCC 7120 / SAG 25.82 / UTEX 2576).